The primary structure comprises 631 residues: Phosphomethylpyrimidine synthase (631 aa).

Substrate contacts are provided by residues N239, M268, Y297, H333, 353-355 (SRG), 394-397 (DGLR), and E433. H437 serves as a coordination point for Zn(2+). Residue Y460 participates in substrate binding. H501 lines the Zn(2+) pocket. Residues C581, C584, and C589 each contribute to the [4Fe-4S] cluster site.

It belongs to the ThiC family. In terms of assembly, homodimer. [4Fe-4S] cluster is required as a cofactor.

It catalyses the reaction 5-amino-1-(5-phospho-beta-D-ribosyl)imidazole + S-adenosyl-L-methionine = 4-amino-2-methyl-5-(phosphooxymethyl)pyrimidine + CO + 5'-deoxyadenosine + formate + L-methionine + 3 H(+). The protein operates within cofactor biosynthesis; thiamine diphosphate biosynthesis. In terms of biological role, catalyzes the synthesis of the hydroxymethylpyrimidine phosphate (HMP-P) moiety of thiamine from aminoimidazole ribotide (AIR) in a radical S-adenosyl-L-methionine (SAM)-dependent reaction. The protein is Phosphomethylpyrimidine synthase of Salmonella typhi.